The primary structure comprises 80 residues: uncharacterized protein (80 aa).

This is an uncharacterized protein from Lepidoptera (butterflies and moths).